Here is a 494-residue protein sequence, read N- to C-terminus: E3 ubiquitin-protein ligase ari-1.1 (494 aa).

Residues 1 to 30 are compositionally biased toward acidic residues; that stretch reads MSSDDEINMDDSDSSQGEIDDGCMSDDDGI. A disordered region spans residues 1 to 52; sequence MSSDDEINMDDSDSSQGEIDDGCMSDDDGIVLESREQNSSDYKDNGEPDNEV. Positions 33-52 are enriched in basic and acidic residues; that stretch reads ESREQNSSDYKDNGEPDNEV. The TRIAD supradomain stretch occupies residues 124–331; it reads GDAECDICCS…SSWYSCNRFD (208 aa). Positions 128, 131, 142, 144, 147, 150, 169, 174, 214, 219, 235, 237, 242, 245, 250, 255, 282, and 285 each coordinate Zn(2+). The segment at 128 to 174 adopts an RING-type 1 zinc-finger fold; it reads CDICCSLGELSGLSCNHRACTQCWKAYLTNKIANNAQSEIECMAPNC. The segment at 194–255 adopts an IBR-type zinc-finger fold; the sequence is ATYRKLIVAS…GHDWHEPVNC (62 aa). Residues 282–313 form an RING-type 2; atypical zinc finger; that stretch reads CPKCMITIEKDGGCNHMTCKNTACRFEFCWMC. The active site involves Cys295. Residues Cys300, Cys305, Cys310, Cys313, His320, and Cys327 each coordinate Zn(2+). The tract at residues 346 to 494 is ariadne domain; it reads RANLQRYLFY…ADQELWVFNE (149 aa).

It belongs to the RBR family. Ariadne subfamily. In terms of assembly, interacts with ubiquitin-conjugating enzyme E2 ubc-18.

It localises to the nucleus. It is found in the cytoplasm. The catalysed reaction is [E2 ubiquitin-conjugating enzyme]-S-ubiquitinyl-L-cysteine + [acceptor protein]-L-lysine = [E2 ubiquitin-conjugating enzyme]-L-cysteine + [acceptor protein]-N(6)-ubiquitinyl-L-lysine.. Autoinhibited by the ariadne domain, which masks the second RING-type zinc finger that contains the active site and inhibits the E3 activity. Functionally, E3 ubiquitin-protein transferase, which catalyzes ubiquitination of target proteins together with ubiquitin-conjugating enzyme E2 ubc-18. Acts with ubc-18 to regulate pharyngeal development. This Caenorhabditis elegans protein is E3 ubiquitin-protein ligase ari-1.1.